The sequence spans 141 residues: uncharacterized protein (141 aa).

Residues 1–39 (MNNNNNNNNNNNNNNNNNNNNNNNNNSYDSNHSSSSYTS) show a composition bias toward low complexity. Residues 1-48 (MNNNNNNNNNNNNNNNNNNNNNNNNNSYDSNHSSSSYTSENQNREQQF) form a disordered region. The helical transmembrane segment at 109-129 (FFCKIILVFICLVAIYSLVVI) threads the bilayer.

It localises to the membrane. This is an uncharacterized protein from Dictyostelium discoideum (Social amoeba).